A 530-amino-acid polypeptide reads, in one-letter code: Estrogen receptor beta (530 aa).

The modulating stretch occupies residues 1–148; that stretch reads MDIKNSPSSL…GPSSKRDAHF (148 aa). Residue serine 61 is modified to Phosphoserine; alternate. An O-linked (GlcNAc) serine; alternate glycan is attached at serine 61. Phosphoserine; by MAPK is present on residues serine 87 and serine 105. 2 NR C4-type zinc fingers span residues 149 to 169 and 185 to 209; these read CAVC…CEGC and CPAT…LRKC. Residues 149-214 constitute a DNA-binding region (nuclear receptor); it reads CAVCSDYASG…RLRKCYEVGM (66 aa). Residues 264–498 enclose the NR LBD domain; that stretch reads SPEQLVLTLL…DLLLEMMNAH (235 aa). Positions 507–530 are disordered; sequence ITGSECSPAEDSKSTEGSQNPQSP. Polar residues predominate over residues 521-530; the sequence is TEGSQNPQSP.

Belongs to the nuclear hormone receptor family. NR3 subfamily. In terms of assembly, binds DNA as a homodimer. Can form a heterodimer with ESR1. Interacts with NCOA1, NCOA3, NCOA5 and NCOA6 coactivators, leading to a strong increase of transcription of target genes. Interacts with UBE1C and AKAP13. Interacts with DNTTIP2. Interacts with CCDC62 in the presence of estradiol/E2; this interaction seems to enhance the transcription of target genes. Interacts with DNAAF4. Interacts with PRMT2. Interacts with CCAR2 (via N-terminus) in a ligand-independent manner. Interacts with RBM39, in the presence of estradiol (E2). Interacts with STUB1/CHIP. Phosphorylation at Ser-87 and Ser-105 recruits NCOA1.

Its subcellular location is the nucleus. Its function is as follows. Nuclear hormone receptor. Binds estrogens with an affinity similar to that of ESR1/ER-alpha, and activates expression of reporter genes containing estrogen response elements (ERE) in an estrogen-dependent manner. The protein is Estrogen receptor beta (ESR2) of Callithrix jacchus (White-tufted-ear marmoset).